A 224-amino-acid polypeptide reads, in one-letter code: Metalloproteinase inhibitor 4 (224 aa).

The signal sequence occupies residues 1-29; the sequence is MPGSPRPAPSWVLLLRLLALLRPPGLGEA. Cys-30 is a binding site for Zn(2+). 2 involved in metalloproteinase-binding regions span residues 30–33 and 99–100; these read CSCA and SS. 6 disulfides stabilise this stretch: Cys-30-Cys-102, Cys-32-Cys-131, Cys-42-Cys-156, Cys-158-Cys-205, Cys-163-Cys-168, and Cys-176-Cys-197. An NTR domain is found at 30-156; sequence CSCAPAHPQQ…SLNHHYHLNC (127 aa).

The protein belongs to the protease inhibitor I35 (TIMP) family. As to expression, abundant in heart and present at low levels in many other tissues.

It is found in the secreted. Functionally, complexes with metalloproteinases (such as collagenases) and irreversibly inactivates them by binding to their catalytic zinc cofactor. Known to act on MMP-1, MMP-2, MMP-3, MMP-7 and MMP-9. The protein is Metalloproteinase inhibitor 4 (TIMP4) of Homo sapiens (Human).